Consider the following 218-residue polypeptide: Phosphatidylserine decarboxylase proenzyme (218 aa).

Ser-187 functions as the Schiff-base intermediate with substrate; via pyruvic acid in the catalytic mechanism. At Ser-187 the chain carries Pyruvic acid (Ser); by autocatalysis.

Belongs to the phosphatidylserine decarboxylase family. PSD-A subfamily. In terms of assembly, heterodimer of a large membrane-associated beta subunit and a small pyruvoyl-containing alpha subunit. Pyruvate serves as cofactor. In terms of processing, is synthesized initially as an inactive proenzyme. Formation of the active enzyme involves a self-maturation process in which the active site pyruvoyl group is generated from an internal serine residue via an autocatalytic post-translational modification. Two non-identical subunits are generated from the proenzyme in this reaction, and the pyruvate is formed at the N-terminus of the alpha chain, which is derived from the carboxyl end of the proenzyme. The post-translation cleavage follows an unusual pathway, termed non-hydrolytic serinolysis, in which the side chain hydroxyl group of the serine supplies its oxygen atom to form the C-terminus of the beta chain, while the remainder of the serine residue undergoes an oxidative deamination to produce ammonia and the pyruvoyl prosthetic group on the alpha chain.

The protein localises to the cell membrane. The enzyme catalyses a 1,2-diacyl-sn-glycero-3-phospho-L-serine + H(+) = a 1,2-diacyl-sn-glycero-3-phosphoethanolamine + CO2. It participates in phospholipid metabolism; phosphatidylethanolamine biosynthesis; phosphatidylethanolamine from CDP-diacylglycerol: step 2/2. In terms of biological role, catalyzes the formation of phosphatidylethanolamine (PtdEtn) from phosphatidylserine (PtdSer). In Geobacter metallireducens (strain ATCC 53774 / DSM 7210 / GS-15), this protein is Phosphatidylserine decarboxylase proenzyme.